A 245-amino-acid chain; its full sequence is Type II restriction enzyme MjaIV (245 aa).

It carries out the reaction Endonucleolytic cleavage of DNA to give specific double-stranded fragments with terminal 5'-phosphates.. In terms of biological role, a P subtype restriction enzyme that recognizes the double-stranded sequence 5'-GTNNAC-3'; the cleavage site is unknown. The chain is Type II restriction enzyme MjaIV (mjaIVR) from Methanocaldococcus jannaschii (strain ATCC 43067 / DSM 2661 / JAL-1 / JCM 10045 / NBRC 100440) (Methanococcus jannaschii).